The following is a 451-amino-acid chain: Signal transduction histidine-protein kinase ArlS (451 aa).

2 consecutive transmembrane segments (helical) span residues 11–31 (IIVT…IIIF) and 156–176 (IIAL…SYVF). One can recognise an HAMP domain in the interval 178-231 (TQITKPLVSLSNKMIEIRRDGFQNKLQLNTNYEEIDNLANTFNEMMSQIEESFN). A Histidine kinase domain is found at 239-451 (DASHELRTPL…NKGTTFKIIF (213 aa)). Phosphohistidine; by autocatalysis is present on His242.

In terms of processing, autophosphorylated.

It is found in the cell membrane. It catalyses the reaction ATP + protein L-histidine = ADP + protein N-phospho-L-histidine.. Its function is as follows. Member of the two-component regulatory system ArlS/ArlR involved in the regulation of adhesion, autolysis, multidrug resistance and virulence. ArlS probably functions as a sensor protein kinase which is autophosphorylated at a histidine residue and transfers its phosphate group to ArlR. The polypeptide is Signal transduction histidine-protein kinase ArlS (arlS) (Staphylococcus aureus (strain MRSA252)).